We begin with the raw amino-acid sequence, 793 residues long: Probable alpha-fucosidase A (793 aa).

A signal peptide spans 1 to 20 (MLISGSSAALCALALPFAAA). 13 N-linked (GlcNAc...) asparagine glycosylation sites follow: asparagine 30, asparagine 83, asparagine 100, asparagine 104, asparagine 123, asparagine 179, asparagine 199, asparagine 234, asparagine 323, asparagine 597, asparagine 622, asparagine 660, and asparagine 757.

This sequence belongs to the glycosyl hydrolase 95 family.

The protein resides in the secreted. It carries out the reaction an alpha-L-fucoside + H2O = L-fucose + an alcohol. Its function is as follows. Alpha-fucosidase involved in degradation of fucosylated xyloglucans. Hydrolyzes alpha-1,2-linked fucose. This Aspergillus niger (strain ATCC MYA-4892 / CBS 513.88 / FGSC A1513) protein is Probable alpha-fucosidase A (afcA).